We begin with the raw amino-acid sequence, 412 residues long: tRNA (guanine-N(7)-)-methyltransferase non-catalytic subunit WDR4 (412 aa).

An N-acetylalanine modification is found at alanine 2. WD repeat units follow at residues 3 to 40, 50 to 90, 94 to 131, 137 to 174, 180 to 218, 230 to 273, and 319 to 373; these read GSVGLALCGQTLVVRGGSRFLATSIASSDDDSLFIYDC, NKGE…LFRT, QCLSVRTVARRCTALTFIASEEKVLVADKSGDVYSFSV, CGRLELGHLSMLLDVAVSPDDRFILTADRDEKIRVSWA, IESFCLGHTEFVSRISVVPTQPGLLLSSSGDGTLRLWEY, ASLQ…IFQL, and PVGD…SYLK. The segment at 377–412 is disordered; that stretch reads ERLQQQLEKKQRRRSPPPGPDGHAKKMRPGEATLSC. Phosphoserine is present on residues serine 391 and serine 411.

It belongs to the WD repeat TRM82 family. Non-catalytic component of the METTL1-WDR4 complex, composed of METTL1 and WDR4. Interacts with FEN1; the interaction is direct.

It is found in the nucleus. The protein localises to the chromosome. It functions in the pathway tRNA modification; N(7)-methylguanine-tRNA biosynthesis. Functionally, non-catalytic component of the METTL1-WDR4 methyltransferase complex required for the formation of N(7)-methylguanine in a subset of RNA species, such as tRNAs, mRNAs and microRNAs (miRNAs). In the METTL1-WDR4 methyltransferase complex, WDR4 acts as a scaffold for tRNA-binding. Required for the formation of N(7)-methylguanine at position 46 (m7G46) in a large subset of tRNAs that contain the 5'-RAGGU-3' motif within the variable loop. M7G46 interacts with C13-G22 in the D-loop to stabilize tRNA tertiary structure and protect tRNAs from decay. Also required for the formation of N(7)-methylguanine at internal sites in a subset of mRNAs. Also required for methylation of a specific subset of miRNAs, such as let-7. Independently of METTL1, also plays a role in genome stability: localizes at the DNA replication site and regulates endonucleolytic activities of FEN1. The polypeptide is tRNA (guanine-N(7)-)-methyltransferase non-catalytic subunit WDR4 (Homo sapiens (Human)).